The primary structure comprises 992 residues: MKGLGDSRPRHLSDSLDPPHEPLFAGTDRNPYLLSPTEAFAREARFPGQNTLPGDGLFPLNNQLPPPSSTFPRIHYNSHFEVPEESPFPSHAQATKINRLPANLLDQFEKQLPIHRDGFSTLQFPRGEAKARGESPGRIRHLVHSVQRLFFTKAPSLEGTAGKVGGNGSKKGGMEDGKGRRAKSKERAKAGEPKRRSRSNISGWWSSDDNLDGEAGAFRSSGPASGLMTLGRQAERSQPRYFMHAYNTISGHMLKTTKNNTTELTAPPPPPAPPATCPSLGVGTDTNYVKRGSWSTLTLSHAHEVCQKTSATLDKSLLKSKSCHQGLAYHYLQVPGGGGEWSTTLLSPRETDAAAEGPIPCRRMRSGSYIKAMGDEDSDESGGSPKPSPKTAARRQSYLRATQQSLGEQSNPRRSLDRLDSVDMLLPSKCPSWEEDYTPVSDSLNDSSCISQIFGQASLIPQLFGHEQQVREAELSDQYEAACESACSEAESTAAETLDLPLPSYFRSRSHSYLRAIQAGCSQEEDSVSLQSLSPPPSTGSLSNSRTLPSSSCLVAYKKTPPPVPPRTTSKPFISVTVQSSTESAQDTYLDSQDHKSEVTSQSGLSNSSDSLDSSTRPPSVTRGGVAPAPEAPEPPPKHAALKSEQGTLTSSESHPEAAPKRKLSSIGIQVDCIQPVPKEEPSPATKFQSIGVQVEDDWRSSVPSHSMSSRRDTDSDTQDANDSSCKSSERSLPDCTPHPNSISIDAGPRQAPKIAQIKRNLSYGDNSDPALEASSLPPPDPWLETSSSSPAEPAQPGACRRDGYWFLKLLQAETERLEGWCCQMDKETKENNLSEEVLGKVLSAVGSAQLLMSQKFQQFRGLCEQNLNPDANPRPTAQDLAGFWDLLQLSIEDISMKFDELYHLKANSWQLVETPEKRKEEKKPPPPVPKKPAKSKPAVSRDKASDASDKQRQEARKRLLAAKRAASVRQNSATESADSIEIYVPEAQTRL.

The span at methionine 1–histidine 20 shows a compositional bias: basic and acidic residues. Disordered stretches follow at residues methionine 1–asparagine 30, proline 47–proline 66, and leucine 157–serine 206. The span at glycine 162–lysine 171 shows a compositional bias: gly residues. Positions glycine 172–lysine 194 are enriched in basic and acidic residues. Serine 206 and serine 207 each carry phosphoserine. The residue at position 291 (arginine 291) is an Omega-N-methylarginine. Residues serine 342–glutamine 396 form a disordered region. 6 positions are modified to phosphoserine: serine 378, serine 381, serine 388, serine 405, serine 415, and serine 421. Disordered stretches follow at residues serine 527–glutamine 751, serine 763–glycine 798, and threonine 915–leucine 992. A compositionally biased stretch (low complexity) spans valine 528–leucine 554. Polar residues predominate over residues valine 576–aspartate 591. Phosphoserine is present on residues serine 580, serine 581, serine 609, serine 611, serine 665, and serine 744. Residues threonine 600 to serine 620 are compositionally biased toward low complexity. Phosphothreonine is present on threonine 915. 2 stretches are compositionally biased toward basic and acidic residues: residues threonine 915–proline 925 and valine 940–lysine 958. Polar residues predominate over residues valine 969–alanine 978. Serine 973 carries the phosphoserine modification.

The protein belongs to the SAPAP family. In terms of assembly, interacts with DLG1 and DLG4/PSD-95.

The protein localises to the membrane. May play a role in the molecular organization of synapses and neuronal cell signaling. Could be an adapter protein linking ion channel to the subsynaptic cytoskeleton. May induce enrichment of PSD-95/SAP90 at the plasma membrane. This chain is Disks large-associated protein 4 (DLGAP4), found in Homo sapiens (Human).